A 403-amino-acid polypeptide reads, in one-letter code: UPF0284 protein PMT_1350 (403 aa).

The protein belongs to the UPF0284 family.

The sequence is that of UPF0284 protein PMT_1350 from Prochlorococcus marinus (strain MIT 9313).